Reading from the N-terminus, the 277-residue chain is Nickel import ATP-binding protein NikE (277 aa).

The ABC transporter domain occupies 14–253; it reads YRTVSLVGRS…EHPASRALQR (240 aa). ATP is bound at residue 46 to 53; it reads GRSGSGKS.

It belongs to the ABC transporter superfamily. Nickel importer (TC 3.A.1.5.3) family. In terms of assembly, the complex is composed of two ATP-binding proteins (NikD and NikE), two transmembrane proteins (NikB and NikC) and a solute-binding protein (NikA).

The protein localises to the cell inner membrane. The enzyme catalyses Ni(2+)(out) + ATP + H2O = Ni(2+)(in) + ADP + phosphate + H(+). Functionally, part of the ABC transporter complex NikABCDE involved in nickel import. Responsible for energy coupling to the transport system. The polypeptide is Nickel import ATP-binding protein NikE (Rhodospirillum rubrum (strain ATCC 11170 / ATH 1.1.1 / DSM 467 / LMG 4362 / NCIMB 8255 / S1)).